Here is a 721-residue protein sequence, read N- to C-terminus: Transcription activator of gluconeogenesis ARB_05058 (721 aa).

Polar residues predominate over residues 1–34; sequence MSPHQTTGQESDNMTVNGENAQASSQYIQSNEEM. Residues 1–62 are disordered; sequence MSPHQTTGQE…PSRPKRKKAK (62 aa). Residues 40-55 are compositionally biased toward basic and acidic residues; it reads TEKKASTAKAAKDPSR. Residues 65–93 constitute a DNA-binding region (zn(2)-C6 fungal-type); it reads CYACQRGHLTCGDERPCQRCIKRGFQDAC. 5 disordered regions span residues 128-224, 263-300, 353-400, 533-567, and 635-666; these read QNNA…FNSA, GDTP…SNQA, SPAS…TPQL, NHNV…YNSS, and GLNG…QRRW. Polar residues-rich tracts occupy residues 133-213, 267-277, 287-300, and 361-379; these read GSNT…TPSA, PSESGAQRGSI, LTGS…SNQA, and MMTT…GAFN. Composition is skewed to low complexity over residues 380–399 and 543–553; these read SRQN…STPQ and GLMTGSTSRGS. The span at 640–661 shows a compositional bias: polar residues; sequence AASNETNELNGSLTNGATTNGR.

Belongs to the ERT1/acuK family.

It is found in the nucleus. In terms of biological role, transcription factor which regulates nonfermentable carbon utilization. Activator of gluconeogenetic genes. This is Transcription activator of gluconeogenesis ARB_05058 from Arthroderma benhamiae (strain ATCC MYA-4681 / CBS 112371) (Trichophyton mentagrophytes).